The following is a 192-amino-acid chain: A-type ATP synthase subunit E (192 aa).

Belongs to the V-ATPase E subunit family. Has multiple subunits with at least A(3), B(3), C, D, E, F, H, I and proteolipid K(x).

The protein resides in the cell membrane. In terms of biological role, component of the A-type ATP synthase that produces ATP from ADP in the presence of a proton gradient across the membrane. The sequence is that of A-type ATP synthase subunit E from Halorubrum lacusprofundi (strain ATCC 49239 / DSM 5036 / JCM 8891 / ACAM 34).